The sequence spans 560 residues: Developmental and secondary metabolism regulator veA (560 aa).

A Velvet domain is found at 35 to 241 (GRRLWYRMRV…AEQGCRVRIR (207 aa)). Residues 49–54 (ERARAC) carry the Nuclear localization signal motif. 3 disordered regions span residues 49-70 (ERAR…VDPP), 171-197 (KEDK…ATGG), and 250-560 (DGKG…RLRY). A compositionally biased stretch (basic and acidic residues) spans 171 to 183 (KEDKDKDKERDVE). Residues 336–355 (AAPPQPFAQPPSVPASPVYP) show a composition bias toward pro residues. Residues 395–405 (PRRESIHHDYR) are compositionally biased toward basic and acidic residues. A compositionally biased stretch (pro residues) spans 411–439 (QLPPLPPPPYYPPTPQQSHMPPPQPPQVL). Residues 444-453 (IDSNSKSNNR) are compositionally biased toward polar residues. Residues 455–496 (PMPSPTALANSAPRPLASLAPLAPLMQSTSSSAGKGPVHPAT) are PEST. Over residues 461-479 (ALANSAPRPLASLAPLAPL) the composition is skewed to low complexity. 2 stretches are compositionally biased toward basic and acidic residues: residues 508 to 535 (RAHD…RSED) and 546 to 560 (RRAD…RLRY).

It belongs to the velvet family. VeA subfamily. In terms of assembly, component of the heterotrimeric velvet complex composed of laeA, veA and velB; VeA acting as a bridging protein between laeA and velB.

The protein resides in the nucleus. It localises to the cytoplasm. In terms of biological role, component of the velvet transcription factor complex that controls sexual/asexual developmental ratio in response to light, promoting sexual development in the darkness while stimulating asexual sporulation under illumination. The velvet complex acts as a global regulator for secondary metabolite gene expression. Positively regulates chaetoglobosin A biosynthesis by controlling the expression of core genes of the chaetoglobosin A biosynthetic gene cluster and other relevant regulators in a light-dependent manner. VeA directly regulates transcription factors brlA, laeA, and the chaetoglobosin A cluster-specific transcription regulator cheR. Also directly regulates the expression of one of the chaetoglobosin A cluster cytochrome P450 monooxygenases (cheE or cheG), but only indirectly regulates the expression of the PKS-NRPS hybrid cheA. Moreover, VeA has a significant effect on the asexual spores production, irrespective of light or dark condition. The chain is Developmental and secondary metabolism regulator veA from Chaetomium globosum (strain ATCC 6205 / CBS 148.51 / DSM 1962 / NBRC 6347 / NRRL 1970) (Soil fungus).